A 157-amino-acid chain; its full sequence is Ribosome maturation factor RimP (157 aa).

Belongs to the RimP family.

Its subcellular location is the cytoplasm. Functionally, required for maturation of 30S ribosomal subunits. The sequence is that of Ribosome maturation factor RimP from Thermosynechococcus vestitus (strain NIES-2133 / IAM M-273 / BP-1).